We begin with the raw amino-acid sequence, 372 residues long: Heterogeneous nuclear rnp K-like protein 2 (372 aa).

Polar residues predominate over residues 1–23 (MSDINDPNSISLPVGSSCTSRGA). Residues 1 to 49 (MSDINDPNSISLPVGSSCTSRGASTETFTTSRSTTLFSSQQESKDEGNV) are disordered. The segment covering 24-39 (STETFTTSRSTTLFSS) has biased composition (low complexity). KH domains follow at residues 59-123 (TINH…LGQI), 167-232 (IGTS…LLQI), and 283-354 (EFKA…ESML).

The protein belongs to the HEK2 family. Binds RNA.

It localises to the cytoplasm. Its subcellular location is the P-body. The protein localises to the nucleus. The protein resides in the chromosome. It is found in the telomere. Functionally, RNA-binding protein involved in the correct localization of transcripts in the cell. RNA localization is a widespread mechanism for achieving localized protein synthesis. Involved in structural and functional organization of telomeric chromatin and regulates silencing at the HMR locus. This Zygosaccharomyces rouxii (strain ATCC 2623 / CBS 732 / NBRC 1130 / NCYC 568 / NRRL Y-229) protein is Heterogeneous nuclear rnp K-like protein 2 (HEK2).